The chain runs to 362 residues: Histidinol-phosphate aminotransferase (362 aa).

At K219 the chain carries N6-(pyridoxal phosphate)lysine.

Belongs to the class-II pyridoxal-phosphate-dependent aminotransferase family. Histidinol-phosphate aminotransferase subfamily. Homodimer. Pyridoxal 5'-phosphate is required as a cofactor.

It carries out the reaction L-histidinol phosphate + 2-oxoglutarate = 3-(imidazol-4-yl)-2-oxopropyl phosphate + L-glutamate. Its pathway is amino-acid biosynthesis; L-histidine biosynthesis; L-histidine from 5-phospho-alpha-D-ribose 1-diphosphate: step 7/9. The polypeptide is Histidinol-phosphate aminotransferase (Maricaulis maris (strain MCS10) (Caulobacter maris)).